We begin with the raw amino-acid sequence, 2138 residues long: DNA polymerase epsilon catalytic subunit B (2138 aa).

The Nuclear localization signal 1 motif lies at 1224–1231; that stretch reads EKRKWKMT. Positions 2015, 2018, 2040, and 2045 each coordinate Zn(2+). A CysA-type zinc finger spans residues 2015-2045; it reads CSNCGAYRDLDFCRDSALLTEKEWSCADPQC. 4 residues coordinate [4Fe-4S] cluster: Cys-2076, Cys-2079, Cys-2091, and Cys-2093. A CysB motif motif is present at residues 2076–2093; sequence CNRCNQVKAAHLTEQCEC. A Nuclear localization signal 2 motif is present at residues 2107-2114; sequence HKRIEIFL.

It belongs to the DNA polymerase type-B family. As to quaternary structure, heterotetramer. The cofactor is [4Fe-4S] cluster. Mostly expressed at low levels in inflorescence (floral meristem and flowers until anthesis), and, to a lower extent, in seeds.

Its subcellular location is the nucleus. It carries out the reaction DNA(n) + a 2'-deoxyribonucleoside 5'-triphosphate = DNA(n+1) + diphosphate. Functionally, DNA polymerase II, which participates in chromosomal DNA replication. Involved in the determination of cell fate during plant embryogenesis. Contributes to the flowering time repression. In Arabidopsis thaliana (Mouse-ear cress), this protein is DNA polymerase epsilon catalytic subunit B (POL2B).